A 215-amino-acid polypeptide reads, in one-letter code: Pyrrolidone-carboxylate peptidase (215 aa).

Active-site residues include Glu-80, Cys-143, and His-167.

This sequence belongs to the peptidase C15 family. Homotetramer.

The protein resides in the cytoplasm. It catalyses the reaction Release of an N-terminal pyroglutamyl group from a polypeptide, the second amino acid generally not being Pro.. Its function is as follows. Removes 5-oxoproline from various penultimate amino acid residues except L-proline. This Yersinia pestis bv. Antiqua (strain Antiqua) protein is Pyrrolidone-carboxylate peptidase.